Consider the following 463-residue polypeptide: tRNA-2-methylthio-N(6)-dimethylallyladenosine synthase (463 aa).

The 121-residue stretch at 5-125 (RKLHIKSYGC…LPQLLAKAEQ (121 aa)) folds into the MTTase N-terminal domain. Residues Cys14, Cys50, Cys88, Cys166, Cys170, and Cys173 each coordinate [4Fe-4S] cluster. Residues 152 to 384 (RARGISAFVT…QQLIDQQQSA (233 aa)) form the Radical SAM core domain. In terms of domain architecture, TRAM spans 387–449 (KAAIGRTVEV…RYSLLGELAS (63 aa)).

Belongs to the methylthiotransferase family. MiaB subfamily. Monomer. It depends on [4Fe-4S] cluster as a cofactor.

The protein localises to the cytoplasm. It carries out the reaction N(6)-dimethylallyladenosine(37) in tRNA + (sulfur carrier)-SH + AH2 + 2 S-adenosyl-L-methionine = 2-methylsulfanyl-N(6)-dimethylallyladenosine(37) in tRNA + (sulfur carrier)-H + 5'-deoxyadenosine + L-methionine + A + S-adenosyl-L-homocysteine + 2 H(+). Functionally, catalyzes the methylthiolation of N6-(dimethylallyl)adenosine (i(6)A), leading to the formation of 2-methylthio-N6-(dimethylallyl)adenosine (ms(2)i(6)A) at position 37 in tRNAs that read codons beginning with uridine. In Rhodopseudomonas palustris (strain TIE-1), this protein is tRNA-2-methylthio-N(6)-dimethylallyladenosine synthase.